The primary structure comprises 250 residues: Transcriptional activator protein ExpR (250 aa).

The region spanning 173-238 (KSQEADLFSQ…HAIRLGVEMN (66 aa)) is the HTH luxR-type domain. The segment at residues 197-216 (YQEIALILGITTSTVKFHIG) is a DNA-binding region (H-T-H motif).

The protein belongs to the autoinducer-regulated transcriptional regulatory protein family.

In terms of biological role, functions as an OHLL responsive transcriptional regulator that acts in virulence (soft rot disease) through the activation of genes for plant tissue macerating enzymes. This is Transcriptional activator protein ExpR (expR) from Dickeya dadantii (strain 3937) (Erwinia chrysanthemi (strain 3937)).